The primary structure comprises 449 residues: Phosphoglucosamine mutase (449 aa).

S101 functions as the Phosphoserine intermediate in the catalytic mechanism. Mg(2+)-binding residues include S101, D242, D244, and D246. S101 is subject to Phosphoserine.

Belongs to the phosphohexose mutase family. The cofactor is Mg(2+). In terms of processing, activated by phosphorylation.

It carries out the reaction alpha-D-glucosamine 1-phosphate = D-glucosamine 6-phosphate. In terms of biological role, catalyzes the conversion of glucosamine-6-phosphate to glucosamine-1-phosphate. In Methylocella silvestris (strain DSM 15510 / CIP 108128 / LMG 27833 / NCIMB 13906 / BL2), this protein is Phosphoglucosamine mutase.